The primary structure comprises 458 residues: GTPase Der (458 aa).

EngA-type G domains lie at 4–169 (PSIA…PKDL) and 178–353 (IMMS…TQHR). Residues 10–17 (GRPNVGKS), 57–61 (DTGGL), 120–123 (NKCE), 184–191 (GRPNVGKS), 231–235 (DTAGI), and 296–299 (NKWD) contribute to the GTP site. The KH-like domain maps to 354–439 (RRVTTSVVNE…PIILLWRGKQ (86 aa)).

It belongs to the TRAFAC class TrmE-Era-EngA-EngB-Septin-like GTPase superfamily. EngA (Der) GTPase family. In terms of assembly, associates with the 50S ribosomal subunit.

In terms of biological role, GTPase that plays an essential role in the late steps of ribosome biogenesis. The protein is GTPase Der of Prochlorococcus marinus subsp. pastoris (strain CCMP1986 / NIES-2087 / MED4).